Here is a 419-residue protein sequence, read N- to C-terminus: MPIFKKTLIVLSFICLISILIYLNMYLFGTSTVGIYGVILITYLVIKLGLSFLYEPFKGNPHDYKVAAVIPSYNEDAESLLETLKSVLAQTYPLSEIYIVDDGSSNTDAIQLIEEYVNREVDICRNVIVHRSLVNKGKRHAQAWAFERSDADVFLTVDSDTYIYPNALEELLKSFNDETVYAATGHLNARNRQTNLLTRLTDIRYDNAFGVERAAQSLTGNILVCSGPLSIYRREVIIPNLERYKNQTFLGLPVSIGDDRCLTNYAIDLGRTVYQSTARCDTDVPFQLKSYLKQQNRWNKSFFRESIISVKKILSNPIVALWTIFEVVMFMMLIVAIGNLLFNQAIQLDLIKLFAFLSIIFIVALCRNVHYMVKHPASFLLSPLYGILHLFVLQPLKLYSLCTIKNTEWGTRKKVTIFK.

The next 5 helical transmembrane spans lie at 8–28, 33–53, 318–338, 345–365, and 376–396; these read LIVL…MYLF, VGIY…LSFL, IVAL…VAIG, AIQL…IVAL, and PASF…LQPL.

Belongs to the NodC/HAS family. It depends on Mg(2+) as a cofactor.

It is found in the cell membrane. It carries out the reaction [hyaluronan](n) + UDP-N-acetyl-alpha-D-glucosamine = N-acetyl-beta-D-glucosaminyl-(1-&gt;4)-[hyaluronan](n) + UDP + H(+). The enzyme catalyses N-acetyl-beta-D-glucosaminyl-(1-&gt;4)-[hyaluronan](n) + UDP-alpha-D-glucuronate = [hyaluronan](n+1) + UDP + H(+). It functions in the pathway glycan biosynthesis; hyaluronan biosynthesis. Its function is as follows. Glycosaminoglycan synthesis. The hyaluronic acid capsule is involved in the pathogenicity of group A Streptococci; it may be the major virulence determinant. This chain is Hyaluronan synthase (hasA), found in Streptococcus pyogenes serotype M3 (strain ATCC BAA-595 / MGAS315).